We begin with the raw amino-acid sequence, 240 residues long: Ribosomal RNA small subunit methyltransferase G (240 aa).

S-adenosyl-L-methionine-binding positions include Gly-80, Phe-85, 131 to 132 (AE), and Arg-150.

Belongs to the methyltransferase superfamily. RNA methyltransferase RsmG family.

It is found in the cytoplasm. Specifically methylates the N7 position of a guanine in 16S rRNA. This Dictyoglomus thermophilum (strain ATCC 35947 / DSM 3960 / H-6-12) protein is Ribosomal RNA small subunit methyltransferase G.